The primary structure comprises 170 residues: Large ribosomal subunit protein uL5 (170 aa).

The protein belongs to the universal ribosomal protein uL5 family. As to quaternary structure, part of the 50S ribosomal subunit; contacts the 5S rRNA and probably tRNA. Forms a bridge to the 30S subunit in the 70S ribosome.

In terms of biological role, this is one of the proteins that bind and probably mediate the attachment of the 5S RNA into the large ribosomal subunit, where it forms part of the central protuberance. In the 70S ribosome it contacts protein S13 of the 30S subunit (bridge B1b), connecting the 2 subunits; this bridge is implicated in subunit movement. May contact the P site tRNA; the 5S rRNA and some of its associated proteins might help stabilize positioning of ribosome-bound tRNAs. This is Large ribosomal subunit protein uL5 from Methanobrevibacter smithii (strain ATCC 35061 / DSM 861 / OCM 144 / PS).